The chain runs to 117 residues: Large ribosomal subunit protein bL20 (117 aa).

The protein belongs to the bacterial ribosomal protein bL20 family.

Binds directly to 23S ribosomal RNA and is necessary for the in vitro assembly process of the 50S ribosomal subunit. It is not involved in the protein synthesizing functions of that subunit. This Campylobacter hominis (strain ATCC BAA-381 / DSM 21671 / CCUG 45161 / LMG 19568 / NCTC 13146 / CH001A) protein is Large ribosomal subunit protein bL20.